Reading from the N-terminus, the 312-residue chain is Acetylglutamate kinase (312 aa).

Residues 69–70 (GG), Arg91, and Asn191 contribute to the substrate site.

This sequence belongs to the acetylglutamate kinase family. ArgB subfamily.

Its subcellular location is the cytoplasm. It carries out the reaction N-acetyl-L-glutamate + ATP = N-acetyl-L-glutamyl 5-phosphate + ADP. It participates in amino-acid biosynthesis; L-arginine biosynthesis; N(2)-acetyl-L-ornithine from L-glutamate: step 2/4. Catalyzes the ATP-dependent phosphorylation of N-acetyl-L-glutamate. In Streptomyces griseus subsp. griseus (strain JCM 4626 / CBS 651.72 / NBRC 13350 / KCC S-0626 / ISP 5235), this protein is Acetylglutamate kinase.